Here is a 140-residue protein sequence, read N- to C-terminus: 3-hydroxyacyl-[acyl-carrier-protein] dehydratase FabZ (140 aa).

Residue histidine 47 is part of the active site.

This sequence belongs to the thioester dehydratase family. FabZ subfamily.

Its subcellular location is the cytoplasm. The catalysed reaction is a (3R)-hydroxyacyl-[ACP] = a (2E)-enoyl-[ACP] + H2O. Its function is as follows. Involved in unsaturated fatty acids biosynthesis. Catalyzes the dehydration of short chain beta-hydroxyacyl-ACPs and long chain saturated and unsaturated beta-hydroxyacyl-ACPs. This chain is 3-hydroxyacyl-[acyl-carrier-protein] dehydratase FabZ, found in Streptococcus pneumoniae serotype 2 (strain D39 / NCTC 7466).